The primary structure comprises 164 residues: ATP synthase subunit b 2 (164 aa).

The chain crosses the membrane as a helical span at residues 4–24 (TFWAFVGLVLFLALLAYFKVP).

Belongs to the ATPase B chain family. In terms of assembly, F-type ATPases have 2 components, F(1) - the catalytic core - and F(0) - the membrane proton channel. F(1) has five subunits: alpha(3), beta(3), gamma(1), delta(1), epsilon(1). F(0) has three main subunits: a(1), b(2) and c(10-14). The alpha and beta chains form an alternating ring which encloses part of the gamma chain. F(1) is attached to F(0) by a central stalk formed by the gamma and epsilon chains, while a peripheral stalk is formed by the delta and b chains.

It localises to the cell inner membrane. Its function is as follows. F(1)F(0) ATP synthase produces ATP from ADP in the presence of a proton or sodium gradient. F-type ATPases consist of two structural domains, F(1) containing the extramembraneous catalytic core and F(0) containing the membrane proton channel, linked together by a central stalk and a peripheral stalk. During catalysis, ATP synthesis in the catalytic domain of F(1) is coupled via a rotary mechanism of the central stalk subunits to proton translocation. Component of the F(0) channel, it forms part of the peripheral stalk, linking F(1) to F(0). The chain is ATP synthase subunit b 2 from Bartonella quintana (strain Toulouse) (Rochalimaea quintana).